Reading from the N-terminus, the 563-residue chain is Probable lysosomal cobalamin transporter (563 aa).

Helical transmembrane passes span 8-28 (LIWFAYLIVITVLIVVASVFI), 40-60 (FVTFMCVFSIAALLATVMLLP), 95-115 (VIYYSLYFLDALLCLVGIPFA), 144-164 (YTLAFIAVVIALVLVGFFAPM), and 188-208 (AFTFLLGFVTTIGSCLYVFYT). N-linked (GlcNAc...) asparagine glycosylation is present at asparagine 228. The next 4 helical transmembrane spans lie at 314–334 (GGFSLFLVGLSTWISLLMTVI), 374–394 (IIFALIVFLFFWGSVVGVVAV), 416–436 (MLLATAMLTLITLGLNYSVVM), and 506–526 (FGALLLWAHFLFLGIYLVILV). The disordered stretch occupies residues 537–563 (ERQLDEDAEEAEEESLLASTGRSGNPT). Positions 539-551 (QLDEDAEEAEEES) are enriched in acidic residues.

This sequence belongs to the LIMR family. LMBRD1 subfamily.

The protein resides in the lysosome membrane. Functionally, probable lysosomal cobalamin transporter. Required to export cobalamin from lysosomes allowing its conversion to cofactors. This is Probable lysosomal cobalamin transporter from Neosartorya fischeri (strain ATCC 1020 / DSM 3700 / CBS 544.65 / FGSC A1164 / JCM 1740 / NRRL 181 / WB 181) (Aspergillus fischerianus).